The chain runs to 116 residues: Iron-sulfur cluster insertion protein ErpA (116 aa).

Iron-sulfur cluster-binding residues include cysteine 44, cysteine 108, and cysteine 110.

The protein belongs to the HesB/IscA family. In terms of assembly, homodimer. The cofactor is iron-sulfur cluster.

Required for insertion of 4Fe-4S clusters for at least IspG. The protein is Iron-sulfur cluster insertion protein ErpA of Nitrosococcus oceani (strain ATCC 19707 / BCRC 17464 / JCM 30415 / NCIMB 11848 / C-107).